The sequence spans 344 residues: MSDYVELLKRGGNEAIKINPPTGADFHITSRGSDWLFTVFCVNLLFGVILVPLMFRKPVKDRFVYYTAIAPNLFMSIAYFTMASNLGWIPVRAKYNHVQTSTQKEHPGYRQIFYARYVGWFLAFPWPIIQMSLLGGTPLWQIAFNVGMTEIFTVCWLIAACVHSTYKWGYYTIGIGAAIVVCISLMTTTFNLVKARGKDVSNVFITFMSVIMFLWLIAYPTCFGITDGGNVLQPDSATIFYGIIDLLILSILPVLFMPLANYLGIERLGLIFDEEPAEHVGPVAEKKMPSPASFKSSDSDSSIKEKLKLKKKHKKDKKKAKKAKKAKKAKKAQEEEEDVATDSE.

The Extracellular segment spans residues 1–34 (MSDYVELLKRGGNEAIKINPPTGADFHITSRGSD). The helical transmembrane segment at 35 to 55 (WLFTVFCVNLLFGVILVPLMF) threads the bilayer. Topologically, residues 56-62 (RKPVKDR) are cytoplasmic. A helical transmembrane segment spans residues 63–83 (FVYYTAIAPNLFMSIAYFTMA). Residues 84-119 (SNLGWIPVRAKYNHVQTSTQKEHPGYRQIFYARYVG) are Extracellular-facing. A helical membrane pass occupies residues 120–140 (WFLAFPWPIIQMSLLGGTPLW). Glutamine 141 is a topological domain (cytoplasmic). A helical transmembrane segment spans residues 142-162 (IAFNVGMTEIFTVCWLIAACV). Residues 163–172 (HSTYKWGYYT) lie on the Extracellular side of the membrane. The helical transmembrane segment at 173–193 (IGIGAAIVVCISLMTTTFNLV) threads the bilayer. Over 194 to 202 (KARGKDVSN) the chain is Cytoplasmic. The helical transmembrane segment at 203 to 223 (VFITFMSVIMFLWLIAYPTCF) threads the bilayer. Residues 224-238 (GITDGGNVLQPDSAT) lie on the Extracellular side of the membrane. Residues 239-259 (IFYGIIDLLILSILPVLFMPL) form a helical membrane-spanning segment. The Cytoplasmic portion of the chain corresponds to 260–344 (ANYLGIERLG…EEEDVATDSE (85 aa)). The interval 282–344 (PVAEKKMPSP…EEEDVATDSE (63 aa)) is disordered. Lysine 286 is covalently cross-linked (Glycyl lysine isopeptide (Lys-Gly) (interchain with G-Cter in ubiquitin)). Serine 293 is modified (phosphoserine). Positions 297–306 (SDSDSSIKEK) are enriched in basic and acidic residues. Basic residues predominate over residues 307 to 330 (LKLKKKHKKDKKKAKKAKKAKKAK). The span at 334-344 (EEEEDVATDSE) shows a compositional bias: acidic residues. At threonine 341 the chain carries Phosphothreonine. Serine 343 carries the post-translational modification Phosphoserine.

It belongs to the archaeal/bacterial/fungal opsin family.

Its subcellular location is the membrane. The sequence is that of Protein YRO2 (YRO2) from Saccharomyces cerevisiae (strain ATCC 204508 / S288c) (Baker's yeast).